Reading from the N-terminus, the 111-residue chain is MIGVVLVLASLLSVGGQLCQKQATRPLTAGGRRRHLMLWLGLALICMGAAMVLWLLVLQTLPVGIAYPMLSLNFVWVTLAAWKIWHEQVPPRHWLGVALIISGIIILGSAA.

3 helical membrane passes run 38 to 58, 61 to 81, and 91 to 111; these read LWLGLALICMGAAMVLWLLVL, LPVGIAYPMLSLNFVWVTLAA, and PRHWLGVALIISGIIILGSAA. The 70-residue stretch at 40–109 folds into the EamA domain; that stretch reads LGLALICMGA…IISGIIILGS (70 aa).

This sequence belongs to the ArnE family. As to quaternary structure, heterodimer of ArnE and ArnF.

It is found in the cell inner membrane. It functions in the pathway bacterial outer membrane biogenesis; lipopolysaccharide biosynthesis. Its function is as follows. Translocates 4-amino-4-deoxy-L-arabinose-phosphoundecaprenol (alpha-L-Ara4N-phosphoundecaprenol) from the cytoplasmic to the periplasmic side of the inner membrane. The polypeptide is Probable 4-amino-4-deoxy-L-arabinose-phosphoundecaprenol flippase subunit ArnE (Salmonella agona (strain SL483)).